A 388-amino-acid polypeptide reads, in one-letter code: Xylose isomerase (388 aa).

Residues His54 and Asp57 contribute to the active site. Glu181, Glu217, His220, Asp245, Asp255, Asp257, and Asp287 together coordinate Mg(2+).

This sequence belongs to the xylose isomerase family. As to quaternary structure, homotetramer. It depends on Mg(2+) as a cofactor.

It is found in the cytoplasm. The catalysed reaction is alpha-D-xylose = alpha-D-xylulofuranose. The protein is Xylose isomerase of Streptomyces avermitilis (strain ATCC 31267 / DSM 46492 / JCM 5070 / NBRC 14893 / NCIMB 12804 / NRRL 8165 / MA-4680).